A 257-amino-acid chain; its full sequence is Glutamate racemase (257 aa).

Substrate contacts are provided by residues 12 to 13 (DS) and 44 to 45 (YG). The active-site Proton donor/acceptor is Cys-75. 76–77 (NT) contacts substrate. Cys-176 (proton donor/acceptor) is an active-site residue. Position 177–178 (177–178 (TH)) interacts with substrate.

The protein belongs to the aspartate/glutamate racemases family.

It carries out the reaction L-glutamate = D-glutamate. The protein operates within cell wall biogenesis; peptidoglycan biosynthesis. Functionally, provides the (R)-glutamate required for cell wall biosynthesis. This Thermus thermophilus (strain ATCC 27634 / DSM 579 / HB8) protein is Glutamate racemase.